The chain runs to 123 residues: WAP four-disulfide core domain protein 5 (123 aa).

Positions 1-24 are cleaved as a signal peptide; that stretch reads MRIQSLLLLGALLAVGSQLPAVFG. WAP domains follow at residues 27-73 and 74-121; these read KGEK…CVPR and VSVK…RDPA. Cystine bridges form between Cys-34–Cys-62, Cys-41–Cys-66, Cys-49–Cys-61, Cys-55–Cys-70, Cys-81–Cys-109, Cys-88–Cys-113, Cys-96–Cys-108, and Cys-102–Cys-117.

Its subcellular location is the secreted. Putative acid-stable proteinase inhibitor. In Chlorocebus aethiops (Green monkey), this protein is WAP four-disulfide core domain protein 5 (WFDC5).